The sequence spans 393 residues: Dual-specificity RNA methyltransferase RlmN (393 aa).

Residue Glu114 is the Proton acceptor of the active site. Residues 120-359 form the Radical SAM core domain; sequence EDDRATLCVS…VIVRKTRGDD (240 aa). An intrachain disulfide couples Cys127 to Cys364. The [4Fe-4S] cluster site is built by Cys134, Cys138, and Cys141. Residues 188-189, Ser220, 242-244, and Asn321 each bind S-adenosyl-L-methionine; these read GE and SLH. Cys364 (S-methylcysteine intermediate) is an active-site residue.

This sequence belongs to the radical SAM superfamily. RlmN family. [4Fe-4S] cluster is required as a cofactor.

The protein resides in the cytoplasm. The enzyme catalyses adenosine(2503) in 23S rRNA + 2 reduced [2Fe-2S]-[ferredoxin] + 2 S-adenosyl-L-methionine = 2-methyladenosine(2503) in 23S rRNA + 5'-deoxyadenosine + L-methionine + 2 oxidized [2Fe-2S]-[ferredoxin] + S-adenosyl-L-homocysteine. It carries out the reaction adenosine(37) in tRNA + 2 reduced [2Fe-2S]-[ferredoxin] + 2 S-adenosyl-L-methionine = 2-methyladenosine(37) in tRNA + 5'-deoxyadenosine + L-methionine + 2 oxidized [2Fe-2S]-[ferredoxin] + S-adenosyl-L-homocysteine. Specifically methylates position 2 of adenine 2503 in 23S rRNA and position 2 of adenine 37 in tRNAs. m2A2503 modification seems to play a crucial role in the proofreading step occurring at the peptidyl transferase center and thus would serve to optimize ribosomal fidelity. In Actinobacillus pleuropneumoniae serotype 5b (strain L20), this protein is Dual-specificity RNA methyltransferase RlmN.